Here is a 937-residue protein sequence, read N- to C-terminus: MHRPRRRGTRPPLLALLAALLLAARGAAAQETELSVSAELVPTSSWNISSELNKDSYLTLDEPMNNITTSLGQTAELHCKVSGNPPPTIRWFKNDAPVVQEPRRLSFRSTIYGSRLRIRNLDTTDTGYFQCVATNGKEVVSSTGVLFVKFGPPPTASPGYSDEYEEDGFCQPYRGIACARFIGNRTVYMESLHMQGEIENQITAAFTMIGTSSHLSDKCSQFAIPSLCHYAFPYCDETSSVPKPRDLCRDECEILENVLCQTEYIFARSNPMILMRLKLPNCEDLPQPESPEAANCIRIGIPMADPINKNHKCYNSTGVDYRGTVSVTKSGRQCQPWNSQYPHTHTFTALRFPELNGGHSYCRNPGNQKEAPWCFTLDENFKSDLCDIPACDSKDSKEKNKMEILYILVPSVAIPLAIALLFFFICVCRNNQKSSSAPVQRQPKHVRGQNVEMSMLNAYKPKSKAKELPLSAVRFMEELGECAFGKIYKGHLYLPGMDHAQLVAIKTLKDYNNPQQWTEFQQEASLMAELHHPNIVCLLGAVTQEQPVCMLFEYINQGDLHEFLIMRSPHSDVGCSSDEDGTVKSSLDHGDFLHIAIQIAAGMEYLSSHFFVHKDLAARNILIGEQLHVKISDLGLSREIYSADYYRVQSKSLLPIRWMPPEAIMYGKFSSDSDIWSFGVVLWEIFSFGLQPYYGFSNQEVIEMVRKRQLLPCSEDCPPRMYSLMTECWNEIPSRRPRFKDIHVRLRSWEGLSSHTSSTTPSGGNATTQTTSLSASPVSNLSNPRYPNYMFPSQGITPQGQIAGFIGPPIPQNQRFIPINGYPIPPGYAAFPAAHYQPTGPPRVIQHCPPPKSRSPSSASGSTSTGHVTSLPSSGSNQEANIPLLPHMSIPNHPGGMGITVFGNKSQKPYKIDSKQASLLGDANIHGHTESMISAEL.

The signal sequence occupies residues 1–29 (MHRPRRRGTRPPLLALLAALLLAARGAAA). At 30–406 (QETELSVSAE…KEKNKMEILY (377 aa)) the chain is on the extracellular side. Residues 42–147 (PTSSWNISSE…EVVSSTGVLF (106 aa)) enclose the Ig-like C2-type domain. 2 N-linked (GlcNAc...) asparagine glycosylation sites follow: Asn-47 and Asn-66. Intrachain disulfides connect Cys-79-Cys-131, Cys-170-Cys-235, Cys-178-Cys-228, Cys-219-Cys-260, Cys-248-Cys-296, Cys-252-Cys-282, Cys-313-Cys-391, Cys-334-Cys-374, and Cys-362-Cys-386. One can recognise an FZ domain in the interval 165–299 (EEDGFCQPYR…SPEAANCIRI (135 aa)). Asn-184 carries an N-linked (GlcNAc...) asparagine glycan. Residues 312-391 (KCYNSTGVDY…KSDLCDIPAC (80 aa)) enclose the Kringle domain. N-linked (GlcNAc...) asparagine glycosylation occurs at Asn-315. The helical transmembrane segment at 407-427 (ILVPSVAIPLAIALLFFFICV) threads the bilayer. The Cytoplasmic segment spans residues 428–937 (CRNNQKSSSA…HTESMISAEL (510 aa)). The Protein kinase domain occupies 473–746 (VRFMEELGEC…PRFKDIHVRL (274 aa)). ATP contacts are provided by residues 479 to 487 (LGECAFGKI) and Lys-506. Tyr-645 is subject to Phosphotyrosine; by autocatalysis. Residues 753 to 762 (SSHTSSTTPS) are compositionally biased toward low complexity. Disordered regions lie at residues 753–779 (SSHT…SPVS) and 833–890 (AAHY…HMSI). The span at 763-779 (GGNATTQTTSLSASPVS) shows a compositional bias: polar residues. The segment covering 854–864 (RSPSSASGSTS) has biased composition (low complexity). Positions 865–880 (TGHVTSLPSSGSNQEA) are enriched in polar residues.

It belongs to the protein kinase superfamily. Tyr protein kinase family. ROR subfamily. Interacts with ERBB2 and IGFBP5. As to expression, expressed strongly in human heart, lung and kidney, but weakly in the CNS. Isoform Short is strongly expressed in fetal and adult CNS and in a variety of human cancers, including those originating from CNS or PNS neuroectoderm.

Its subcellular location is the membrane. The protein localises to the cell projection. The protein resides in the axon. Functionally, has very low kinase activity in vitro and is unlikely to function as a tyrosine kinase in vivo. Receptor for ligand WNT5A which activate downstream NFkB signaling pathway and may result in the inhibition of WNT3A-mediated signaling. In inner ear, crucial for spiral ganglion neurons to innervate auditory hair cells. Via IGFBP5 ligand, forms a complex with ERBB2 to enhance CREB oncogenic signaling. This chain is Inactive tyrosine-protein kinase transmembrane receptor ROR1 (ROR1), found in Homo sapiens (Human).